A 339-amino-acid polypeptide reads, in one-letter code: Very-long-chain 3-oxoacyl-CoA reductase (339 aa).

Residues 21–41 form a helical membrane-spanning segment; sequence WTTFLLALGSFNALRIIYQTL. Residues valine 67, asparagine 96, aspartate 121, asparagine 148, tyrosine 215, lysine 219, valine 248, and serine 250 each coordinate NADP(+). Tyrosine 215 (proton acceptor) is an active-site residue. The active-site Lowers pKa of active site Tyr is lysine 219.

This sequence belongs to the short-chain dehydrogenases/reductases (SDR) family.

Its subcellular location is the endoplasmic reticulum membrane. The catalysed reaction is a very-long-chain (3R)-3-hydroxyacyl-CoA + NADP(+) = a very-long-chain 3-oxoacyl-CoA + NADPH + H(+). It functions in the pathway lipid metabolism; fatty acid biosynthesis. In terms of biological role, component of the microsomal membrane bound fatty acid elongation system, which produces the 26-carbon very long-chain fatty acids (VLCFA) from palmitate. Catalyzes the reduction of the 3-ketoacyl-CoA intermediate that is formed in each cycle of fatty acid elongation. VLCFAs serve as precursors for ceramide and sphingolipids. In Coprinopsis cinerea (strain Okayama-7 / 130 / ATCC MYA-4618 / FGSC 9003) (Inky cap fungus), this protein is Very-long-chain 3-oxoacyl-CoA reductase.